The chain runs to 230 residues: MKKKKIILMRHGESKWNKLNKFTGWQDIGLTKNGKKEAKLAAKLIKKNNFIFDIAYTSILKRAIYTLWIILKKTNQIWIPVYKSWKLNERNYGALEGLNKEKIKKKYGDEQVQLWRRSFTVCPPNLNISNKYHPIYDIKYKKLKKHELPTSESLEMTFNRVIPFWEFKILPQLEKNKNILIVAHGNSLRALIKYLGNISDSDIIDLDISTGKPLVYEFSNTNKPLKYYYL.

Substrate is bound by residues 10–17, 23–24, R62, 89–92, K100, 116–117, and 185–186; these read RHGESKWN, TG, ERNY, RR, and GN. H11 acts as the Tele-phosphohistidine intermediate in catalysis. Catalysis depends on E89, which acts as the Proton donor/acceptor.

The protein belongs to the phosphoglycerate mutase family. BPG-dependent PGAM subfamily. In terms of assembly, homodimer.

The catalysed reaction is (2R)-2-phosphoglycerate = (2R)-3-phosphoglycerate. It participates in carbohydrate degradation; glycolysis; pyruvate from D-glyceraldehyde 3-phosphate: step 3/5. Its function is as follows. Catalyzes the interconversion of 2-phosphoglycerate and 3-phosphoglycerate. The sequence is that of 2,3-bisphosphoglycerate-dependent phosphoglycerate mutase from Buchnera aphidicola subsp. Cinara cedri (strain Cc).